Consider the following 185-residue polypeptide: Elongation factor P 1 (185 aa).

The protein belongs to the elongation factor P family.

Its subcellular location is the cytoplasm. It functions in the pathway protein biosynthesis; polypeptide chain elongation. In terms of biological role, involved in peptide bond synthesis. Stimulates efficient translation and peptide-bond synthesis on native or reconstituted 70S ribosomes in vitro. Probably functions indirectly by altering the affinity of the ribosome for aminoacyl-tRNA, thus increasing their reactivity as acceptors for peptidyl transferase. This is Elongation factor P 1 (efp1) from Chlamydia pneumoniae (Chlamydophila pneumoniae).